Consider the following 937-residue polypeptide: Protein SEY1 homolog (937 aa).

At 1–848 (MEKGVEKTQI…ETGSKMSLKN (848 aa)) the chain is on the cytoplasmic side. The GB1/RHD3-type G domain occupies 34–280 (GFSYNVIAVL…IPSDGFAQYC (247 aa)). Residue 44–51 (GSQSSGKS) coordinates GTP. Coiled coils occupy residues 319–339 (NKEIKEKSIESHNKVIENFKE) and 725–750 (YLDEIMDVLKNKLDEISENLATIIIQ). A helical transmembrane segment spans residues 849-869 (VPVVFWIILLLFGWNEILFFI). The Lumenal portion of the chain corresponds to 870-872 (RMF). Residues 873 to 893 (FKLNVILPLFFAAAFIVSTFV) traverse the membrane as a helical segment. The Cytoplasmic portion of the chain corresponds to 894–937 (YNGNTQALSYINKIIFYMAKNSYNFFKHIQAISNPPPKNVQKQE).

It belongs to the TRAFAC class dynamin-like GTPase superfamily. GB1/RHD3 GTPase family. RHD3 subfamily.

The protein localises to the endoplasmic reticulum membrane. Probable GTP-binding protein involved in generating and maintaining the structure of the tubular endoplasmic reticulum network. This chain is Protein SEY1 homolog, found in Plasmodium falciparum (isolate 3D7).